Here is a 787-residue protein sequence, read N- to C-terminus: Signal transducer and activator of transcription 5B (787 aa).

Tyrosine 90 is subject to Phosphotyrosine. Serine 128 carries the phosphoserine modification. Residues 589–686 (WNDGAILGFV…EVYSKYYTPV (98 aa)) enclose the SH2 domain. Tyrosine 682 carries the phosphotyrosine modification. Tyrosine 699 is modified (phosphotyrosine; by HCK, JAK and PTK6).

The protein belongs to the transcription factor STAT family. As to quaternary structure, upon activation, forms a homodimer or a heterodimer with a related family member. Binds NR3C1. Interacts with NCOA1. Interacts with NMI. Interacts with SOCS7. Interacts (via SH2 domain) with INSR. Interacts with CPEB3; this inhibits STAT5B-mediated transcriptional activation. Tyrosine phosphorylated in response to signaling via activated KIT, resulting in translocation to the nucleus. Tyrosine phosphorylated in response to signaling via activated FLT3; wild-type FLT3 results in much weaker phosphorylation than constitutively activated mutant FLT3. Alternatively, can be phosphorylated by JAK2. Phosphorylation at Tyr-699 by PTK6 or HCK leads to an increase of its transcriptional activity.

It localises to the cytoplasm. The protein localises to the nucleus. Carries out a dual function: signal transduction and activation of transcription. Mediates cellular responses to the cytokine KITLG/SCF and other growth factors. Binds to the GAS element and activates PRL-induced transcription. Positively regulates hematopoietic/erythroid differentiation. This Sus scrofa (Pig) protein is Signal transducer and activator of transcription 5B (STAT5B).